Here is an 897-residue protein sequence, read N- to C-terminus: MPEQDKDPRVQENPDDQRTVPEVTGDARSAFWPLRDNGGPSPFVPRPGPLQTDLHAQSSEIRYNHTSQTSWTSSSTKRNAISSSYSSTGGLPGLKQRRGPASSRCQLTLSYSKTVSEDRPQAVSSGHTRCEKGADTAPGQTIAPTGGSPRSQDSRPRRRKIPLLPRRRGEPLMLPPPLELGYRVTAEDLHLEKETAFQRINSALHVEDKAIPDCRPSRPSHTLSSLATGASGGPPVSKAPTMDAQQDRPKSQDSLGLLAPLASAAEVPSTAPVSGKKHRPPGPLFSSSDPLPATSYHSRDTAQVTSLIPATFTAASRDAGMRRTRSAPAAATAAPPPSTLNNTSGSLLNAVDGGPSHFLASATAAARAQRSEVRYNQRSQTSRTRSCLKRNASSSSSSHSSTEGLQELKRRRGPASSHCQLAHSSSNTVSEDGPQAVSSGHRCENKAGTAPGQTLAPRGGSPRSQASRPHINSALYVEDKAISDCRPSRPSHTLSSLATGASGGPPVSKAPTMDAQQDRPKSQDCLGLVAPLASAAEVPSTAPVSGKKHRPPGPLFSSSDPLPATSSHSRDSAQVTSLIPATFTAASRDAGMRRTRPGTSAPAAAAAALPPSTLNPTSGSLLNAVDGGPSHFLASATAAARAQRSEVRYNQRSQTSRTRSCLKRNASSSSHSSTEGLQELKRRRGPASSHCQLAHSSSNTVSEDGPQAVSSGHRCENKAGTAPGQTLAPRGGYPRSQASRPRINSALHVEDKAISDCRPSRPSHTLSSLATGASGGPPVSKAPTMDAQQDRPKSQDCLGLLAPLASAAEVSSTAPVSGKKHRPPGPLFSSSDPLPATSSHSGDSAQDTSLIPAPFTPASRDAGIRRMFRVRNCLRGLGLFLLVFSFFFLLTWASFSF.

Positions 1–19 are enriched in basic and acidic residues; the sequence is MPEQDKDPRVQENPDDQRT. Disordered stretches follow at residues 1–177, 211–252, 266–302, 315–348, 362–469, 484–522, 536–612, 642–741, 753–793, and 812–856; these read MPEQ…LPPP, IPDC…PKSQ, EVPS…RDTA, ASRD…GSLL, ATAA…ASRP, DCRP…RPKS, AEVP…LPPS, AQRS…ASRP, AISD…DRPK, and STAP…APFT. Residues 54-65 are compositionally biased toward polar residues; the sequence is LHAQSSEIRYNH. Residues 66-76 are compositionally biased toward low complexity; the sequence is TSQTSWTSSST. Polar residues-rich tracts occupy residues 77-89, 103-114, and 219-228; these read KRNA…SSTG, SRCQLTLSYSKT, and PSHTLSSLAT. 4 stretches are compositionally biased toward polar residues: residues 376–385, 417–430, 490–499, and 556–579; these read NQRSQTSRTR, SHCQ…NTVS, PSHTLSSLAT, and FSSS…TSLI. Residues 599–612 show a composition bias toward low complexity; that stretch reads TSAPAAAAAALPPS. 4 stretches are compositionally biased toward polar residues: residues 650–676, 689–702, 762–771, and 828–849; these read NQRS…STEG, SHCQ…NTVS, PSHTLSSLAT, and FSSS…QDTS. Residues 877 to 897 traverse the membrane as a helical segment; the sequence is LGLFLLVFSFFFLLTWASFSF.

It belongs to the POM121 family.

The protein localises to the membrane. This is Putative POM121-like protein 1-like from Homo sapiens (Human).